Consider the following 805-residue polypeptide: Arginine/serine-rich protein PNISR (805 aa).

Over residues 74–88 (PNNHGNFQGDSNFNR) the composition is skewed to polar residues. Disordered stretches follow at residues 74-331 (PNNH…EEKE) and 382-805 (LTGL…SRSR). Composition is skewed to pro residues over residues 100-115 (PPHP…PTPG) and 183-195 (YWQP…PAPP). Basic and acidic residues predominate over residues 197–210 (NRRERPSSFRDRQR). Phosphoserine occurs at positions 204 and 211. A Glycyl lysine isopeptide (Lys-Gly) (interchain with G-Cter in SUMO2) cross-link involves residue lysine 218. The stretch at 237 to 276 (REGLEKMEREKQKKLEKERMEQQRSQLSKKEKKATEDAEG) forms a coiled coil. The segment covering 238–258 (EGLEKMEREKQKKLEKERMEQ) has biased composition (basic and acidic residues). Phosphoserine occurs at positions 290, 304, 313, and 321. Acidic residues predominate over residues 290 to 299 (SDEEEEDTEN). A compositionally biased stretch (gly residues) spans 384–393 (GLGGLGGYGS). The span at 421 to 463 (QKQEAFWRKEKEQQLLHDKQMEEEKQQTERVTKEMNEFIHKEQ) shows a compositional bias: basic and acidic residues. The stretch at 429–461 (KEKEQQLLHDKQMEEEKQQTERVTKEMNEFIHK) forms a coiled coil. A phosphoserine mark is found at serine 465 and serine 467. Composition is skewed to basic and acidic residues over residues 470–486 (EARE…KRTP) and 494–506 (EPKK…EKQG). Phosphothreonine is present on threonine 485. A Glycyl lysine isopeptide (Lys-Gly) (interchain with G-Cter in SUMO2) cross-link involves residue lysine 496. Low complexity predominate over residues 508-550 (SRSGSSSSGSSSSNSRTSSTSSTVSSSSYSSSSGSSRTSSRSS). Composition is skewed to basic residues over residues 551-579 (SPKR…YSRR), 587-598 (ARVKIRDRRRSN), and 607-639 (RRNR…SRDR). A compositionally biased stretch (basic and acidic residues) spans 659–721 (EAKEQERKKE…KRKRESERTF (63 aa)). Positions 673–703 (IDKDRKKKDKEREREQDKRKEKQKREEKDFK) form a coiled coil. Lysine 703 participates in a covalent cross-link: Glycyl lysine isopeptide (Lys-Gly) (interchain with G-Cter in SUMO2). Serine 726 carries the phosphoserine modification. A compositionally biased stretch (basic and acidic residues) spans 732-753 (IRHDSRQDSKKSTTKDSKKHSG). Over residues 754-767 (SDSSGRSSSESPGS) the composition is skewed to low complexity. Composition is skewed to basic residues over residues 771–781 (KKAKKPKHSRS) and 789–805 (RSGK…SRSR).

It belongs to the splicing factor SR family. Interacts with PNN. Expressed in heart, skeletal muscle, thymus, spleen, kidney, liver, placenta and leukocytes.

Its subcellular location is the nucleus speckle. The chain is Arginine/serine-rich protein PNISR (PNISR) from Homo sapiens (Human).